Consider the following 264-residue polypeptide: Ribosome-recycling factor, mitochondrial (264 aa).

This sequence belongs to the RRF family.

The protein localises to the mitochondrion. In terms of biological role, necessary for protein synthesis in mitochondria. Functions as a ribosome recycling factor in mitochondria. The polypeptide is Ribosome-recycling factor, mitochondrial (RRF1) (Yarrowia lipolytica (strain CLIB 122 / E 150) (Yeast)).